An 820-amino-acid chain; its full sequence is Crinkler effector protein 108 (820 aa).

Positions 1–17 (MVKLYCAVVGVAGSAFS) are cleaved as a signal peptide. The interval 18–55 (VRVDESDTVDDLKDAIKAKKPNDFKDIDADKLELYVAK) is LQLFLAK domain. The tract at residues 58–111 (GVWLTEADVKSGVADITGLVRLEVVRAKLFSVGLSDEVVSEVDAQEEAAGRGPV) is DWL domain. The HVLVXXP motif signature appears at 112–117 (NVLVVV). The Host nuclear localization signal signature appears at 118-124 (PMKKRRV). The segment at 125–820 (DAGVDEERRF…MHYDDDEADL (696 aa)) is C-terminal DC effector domain. 3 N-linked (GlcNAc...) asparagine glycosylation sites follow: N268, N371, and N703. Residues 754–791 (NINTASFHELRRLEGVGDATAAKIIAERTIRRFSNLED) form a hhH DNA-binding domain region.

Belongs to the Crinkler effector family.

Its subcellular location is the secreted. It is found in the host nucleus. Its function is as follows. Secreted effector that suppresses plant basal defense and promotes plant susceptibility via targeting promoters of host HSP gene and thus inhibiting their expression. CRN108 binds directly to heat shock elements (HSEs) 5'-GAAnnTTC-3' and interferes with the association of the HSE with the plant heat shock transcription factors, which initializes HSP gene expression in response to stress. The polypeptide is Crinkler effector protein 108 (Phytophthora sojae (Soybean stem and root rot agent)).